The chain runs to 502 residues: Keratin, type II cytoskeletal 8 (502 aa).

Residues 1 to 98 (MSVRSTKVTY…DPSIQQVRTE (98 aa)) are head. Phosphoserine is present on residues Ser13, Ser26, Ser37, and Ser40. Residues 99–134 (EKEQIKTLNNKFASFIDKVRFLEQQNKMLETKWNLL) form a coil 1A region. The IF rod domain occupies 99–410 (EKEQIKTLNN…KLLEGEESRL (312 aa)). The linker 1 stretch occupies residues 135-151 (QNQKTTRSNMDGMFEAY). The interval 152–243 (ISNLRRQLDG…QLYEEELREM (92 aa)) is coil 1B. The segment at 244–267 (QSQISDTSVVLSMDNNRSLDLDGI) is linker 12. Residues 268-406 (IAEVRAQYED…ATYRKLLEGE (139 aa)) form a coil 2 region. The interval 269–390 (AEVRAQYEDV…DYQELMNVKL (122 aa)) is necessary for interaction with PNN. A tail region spans residues 407–502 (ESRLESGFQN…SESSDVFSKP (96 aa)). 4 positions are modified to phosphoserine: Ser425, Ser428, Ser436, and Ser444.

Belongs to the intermediate filament family. In terms of assembly, heterotetramer of two type I and two type II keratins. Keratin-8 associates with keratin-18. Expressed in oocytes, eggs, embryos, liver and intestinal mucosa.

The protein resides in the cytoplasm. It localises to the nucleus. The protein localises to the nucleoplasm. It is found in the nucleus matrix. Its function is as follows. Together with KRT19, helps to link the contractile apparatus to dystrophin at the costameres of striated muscle. This is Keratin, type II cytoskeletal 8 from Xenopus laevis (African clawed frog).